We begin with the raw amino-acid sequence, 414 residues long: 4-hydroxy-3-methylbut-2-en-1-yl diphosphate synthase (flavodoxin) (414 aa).

Residues cysteine 304, cysteine 307, cysteine 350, and glutamate 357 each coordinate [4Fe-4S] cluster.

Belongs to the IspG family. [4Fe-4S] cluster is required as a cofactor.

It catalyses the reaction (2E)-4-hydroxy-3-methylbut-2-enyl diphosphate + oxidized [flavodoxin] + H2O + 2 H(+) = 2-C-methyl-D-erythritol 2,4-cyclic diphosphate + reduced [flavodoxin]. It participates in isoprenoid biosynthesis; isopentenyl diphosphate biosynthesis via DXP pathway; isopentenyl diphosphate from 1-deoxy-D-xylulose 5-phosphate: step 5/6. Its function is as follows. Converts 2C-methyl-D-erythritol 2,4-cyclodiphosphate (ME-2,4cPP) into 1-hydroxy-2-methyl-2-(E)-butenyl 4-diphosphate. The sequence is that of 4-hydroxy-3-methylbut-2-en-1-yl diphosphate synthase (flavodoxin) from Aromatoleum aromaticum (strain DSM 19018 / LMG 30748 / EbN1) (Azoarcus sp. (strain EbN1)).